The sequence spans 321 residues: Fe-S cluster assembly protein DRE2 (321 aa).

The tract at residues 1-140 (MNNTAHSMSE…RRPASSSVAE (140 aa)) is N-terminal SAM-like domain. Over residues 128-138 (IESRRPASSSV) the composition is skewed to polar residues. Residues 128–166 (IESRRPASSSVAEKDSTASSGMGAVKLRRKPNENGGHQQ) are disordered. The segment at 140-177 (EKDSTASSGMGAVKLRRKPNENGGHQQKKALLWATQPE) is linker. The [2Fe-2S] cluster site is built by Cys-202, Cys-217, Cys-220, and Cys-222. The segment at 202–222 (CTVDFSAPRTRRKRACKGCTC) is fe-S binding site A. The tract at residues 239 to 263 (QLDPSEVGGTGGKRTEVTTTVKGPN) is disordered. [4Fe-4S] cluster contacts are provided by Cys-283, Cys-286, Cys-294, and Cys-297. 2 short sequence motifs (cx2C motif) span residues 283–286 (CGSC) and 294–297 (CSSC). A fe-S binding site B region spans residues 283–297 (CGSCFLGDAFRCSSC).

Belongs to the anamorsin family. Monomer. Interacts with TAH18. Interacts with MIA40. It depends on [2Fe-2S] cluster as a cofactor. [4Fe-4S] cluster is required as a cofactor.

The protein resides in the cytoplasm. Its subcellular location is the mitochondrion intermembrane space. Component of the cytosolic iron-sulfur (Fe-S) protein assembly (CIA) machinery required for the maturation of extramitochondrial Fe-S proteins. Part of an electron transfer chain functioning in an early step of cytosolic Fe-S biogenesis, facilitating the de novo assembly of a [4Fe-4S] cluster on the scaffold complex CFD1-NBP35. Electrons are transferred to DRE2 from NADPH via the FAD- and FMN-containing protein TAH18. TAH18-DRE2 are also required for the assembly of the diferric tyrosyl radical cofactor of ribonucleotide reductase (RNR), probably by providing electrons for reduction during radical cofactor maturation in the catalytic small subunit RNR2. The sequence is that of Fe-S cluster assembly protein DRE2 from Malassezia globosa (strain ATCC MYA-4612 / CBS 7966) (Dandruff-associated fungus).